A 90-amino-acid chain; its full sequence is Acylphosphatase (90 aa).

In terms of domain architecture, Acylphosphatase-like spans 3 to 90; that stretch reads RVLIKLTGKV…DIYLDFSIVR (88 aa). Active-site residues include R18 and N36.

It belongs to the acylphosphatase family.

The enzyme catalyses an acyl phosphate + H2O = a carboxylate + phosphate + H(+). The sequence is that of Acylphosphatase (acyP) from Shewanella oneidensis (strain ATCC 700550 / JCM 31522 / CIP 106686 / LMG 19005 / NCIMB 14063 / MR-1).